The following is a 435-amino-acid chain: Serine hydroxymethyltransferase (435 aa).

(6S)-5,6,7,8-tetrahydrofolate-binding positions include Leu131 and 135 to 137 (GHL). An N6-(pyridoxal phosphate)lysine modification is found at Lys240.

This sequence belongs to the SHMT family. In terms of assembly, homodimer. Requires pyridoxal 5'-phosphate as cofactor.

The protein localises to the cytoplasm. The enzyme catalyses (6R)-5,10-methylene-5,6,7,8-tetrahydrofolate + glycine + H2O = (6S)-5,6,7,8-tetrahydrofolate + L-serine. It functions in the pathway one-carbon metabolism; tetrahydrofolate interconversion. The protein operates within amino-acid biosynthesis; glycine biosynthesis; glycine from L-serine: step 1/1. Its function is as follows. Catalyzes the reversible interconversion of serine and glycine with tetrahydrofolate (THF) serving as the one-carbon carrier. This reaction serves as the major source of one-carbon groups required for the biosynthesis of purines, thymidylate, methionine, and other important biomolecules. Also exhibits THF-independent aldolase activity toward beta-hydroxyamino acids, producing glycine and aldehydes, via a retro-aldol mechanism. The sequence is that of Serine hydroxymethyltransferase from Bifidobacterium longum subsp. infantis (strain ATCC 15697 / DSM 20088 / JCM 1222 / NCTC 11817 / S12).